A 286-amino-acid polypeptide reads, in one-letter code: MVEEVLSYMITNKDGIYVDCTAGEGGHIKAILGYTNNKAKVIGVDVDYEVLEIAEERLKDLSDNVVLIKSSYKNIDMVLRGLGIDKVDGFLMDLGVSTFQLKGENRGFSFTKDEPLDMRMDVQSEKDAAYIVNNYSQEDLRRIIFEYGEEKRFAHSISKSIVKNRPINTTQELVDAIRKGLPASQVHERHRHFATKTFQALRIEVNEELKNIEETLSKFESFLKVKARVAVITFHSLEDRIVKNFFKNNERYNFLTPKPILPTQEEIKHNPRSRSAKLRVVEYLGA.

Residues Gly-25–His-27, Asp-45, Leu-79, Asp-93, and Gln-100 each bind S-adenosyl-L-methionine.

It belongs to the methyltransferase superfamily. RsmH family.

The protein resides in the cytoplasm. It carries out the reaction cytidine(1402) in 16S rRNA + S-adenosyl-L-methionine = N(4)-methylcytidine(1402) in 16S rRNA + S-adenosyl-L-homocysteine + H(+). Functionally, specifically methylates the N4 position of cytidine in position 1402 (C1402) of 16S rRNA. This chain is Ribosomal RNA small subunit methyltransferase H, found in Petrotoga mobilis (strain DSM 10674 / SJ95).